The following is a 43-amino-acid chain: Myotoxin-2 (43 aa).

Disulfide bonds link Cys4–Cys36, Cys11–Cys30, and Cys18–Cys37.

The protein belongs to the crotamine-myotoxin family. Monomer. As to expression, expressed by the venom gland.

Its subcellular location is the secreted. Functionally, cationic peptide that possesses multiple functions. It acts as a cell-penetrating peptide (CPP), and as a potent voltage-gated potassium channel (Kv) inhibitor. It exhibits antimicrobial activities, hind limb paralysis, and severe muscle necrosis by a non-enzymatic mechanism. The chain is Myotoxin-2 from Crotalus concolor (Midget faded rattlesnake).